The following is a 281-amino-acid chain: NADPH-dependent 7-cyano-7-deazaguanine reductase (281 aa).

89–91 (VES) is a binding site for substrate. NADPH is bound at residue 91–92 (SK). Cysteine 188 functions as the Thioimide intermediate in the catalytic mechanism. The active-site Proton donor is aspartate 195. 227–228 (HE) serves as a coordination point for substrate. 256–257 (RG) provides a ligand contact to NADPH.

The protein belongs to the GTP cyclohydrolase I family. QueF type 2 subfamily. Homodimer.

It localises to the cytoplasm. It catalyses the reaction 7-aminomethyl-7-carbaguanine + 2 NADP(+) = 7-cyano-7-deazaguanine + 2 NADPH + 3 H(+). Its pathway is tRNA modification; tRNA-queuosine biosynthesis. Functionally, catalyzes the NADPH-dependent reduction of 7-cyano-7-deazaguanine (preQ0) to 7-aminomethyl-7-deazaguanine (preQ1). The protein is NADPH-dependent 7-cyano-7-deazaguanine reductase of Azoarcus sp. (strain BH72).